Here is a 174-residue protein sequence, read N- to C-terminus: Mitochondrial protein import protein ZIM17 (174 aa).

The N-terminal 47 residues, M1 to H47, are a transit peptide targeting the mitochondrion. A DNL-type zinc finger spans residues V64–K159. The Zn(2+) site is built by C75, C78, C100, and C103.

In terms of assembly, interacts with SSC1; binds to the nucleotide-free state as well as to the ADP- or ATP-bound state of SSC1. Zn(2+) is required as a cofactor.

The protein resides in the mitochondrion inner membrane. Functionally, involved in protein import into mitochondria. Acts as a Hsp70-specific chaperone that prevents self-aggregation of the matrix Hsp70 chaperones SSC1 (mtHSP70) and SSQ1, thereby maintaining their function in mitochondrial protein import and Fe/S protein biosynthesis. May act together with PAM18 as co-chaperone to facilitate recognition and folding of imported proteins by SSC1 in the mitochondrial matrix. The chain is Mitochondrial protein import protein ZIM17 (ZIM17) from Saccharomyces cerevisiae (strain AWRI1631) (Baker's yeast).